Reading from the N-terminus, the 169-residue chain is Thaumatin-like pathogenesis-related protein 3 (169 aa).

The N-terminal stretch at 1–21 (MATSSAVLFLLLAVFAAGASA) is a signal peptide.

This sequence belongs to the thaumatin family.

Associated with resistance against stem rust fungi. This chain is Thaumatin-like pathogenesis-related protein 3 (RASTL-3), found in Avena sativa (Oat).